The primary structure comprises 88 residues: Large ribosomal subunit protein bL27 (88 aa).

Positions Met1 to Lys24 are disordered.

It belongs to the bacterial ribosomal protein bL27 family.

In Syntrophobacter fumaroxidans (strain DSM 10017 / MPOB), this protein is Large ribosomal subunit protein bL27.